The chain runs to 374 residues: Chaperone protein DnaJ (374 aa).

In terms of domain architecture, J spans 3-67; it reads DFYQILGVSR…ETRARYDQFG (65 aa). The tract at residues 99-118 is disordered; that stretch reads GQSSQGGRSQRRGPQQGDDL. The segment covering 103-115 has biased composition (low complexity); sequence QGGRSQRRGPQQG. A CR-type zinc finger spans residues 132 to 214; the sequence is GQQREINIPH…CGGNGVKQVR (83 aa). Positions 145, 148, 162, 165, 188, 191, 202, and 205 each coordinate Zn(2+). CXXCXGXG motif repeat units follow at residues 145–152, 162–169, 188–195, and 202–209; these read CEVCRGTG, CTTCGGSG, CPTCNGVG, and CTSCGGNG.

It belongs to the DnaJ family. In terms of assembly, homodimer. Zn(2+) serves as cofactor.

The protein resides in the cytoplasm. In terms of biological role, participates actively in the response to hyperosmotic and heat shock by preventing the aggregation of stress-denatured proteins and by disaggregating proteins, also in an autonomous, DnaK-independent fashion. Unfolded proteins bind initially to DnaJ; upon interaction with the DnaJ-bound protein, DnaK hydrolyzes its bound ATP, resulting in the formation of a stable complex. GrpE releases ADP from DnaK; ATP binding to DnaK triggers the release of the substrate protein, thus completing the reaction cycle. Several rounds of ATP-dependent interactions between DnaJ, DnaK and GrpE are required for fully efficient folding. Also involved, together with DnaK and GrpE, in the DNA replication of plasmids through activation of initiation proteins. This chain is Chaperone protein DnaJ, found in Prochlorococcus marinus subsp. pastoris (strain CCMP1986 / NIES-2087 / MED4).